A 273-amino-acid polypeptide reads, in one-letter code: Ribosomal RNA small subunit methyltransferase A (273 aa).

Residues Asn18, Leu20, Gly45, Glu66, Asp91, and Asn113 each contribute to the S-adenosyl-L-methionine site.

It belongs to the class I-like SAM-binding methyltransferase superfamily. rRNA adenine N(6)-methyltransferase family. RsmA subfamily.

Its subcellular location is the cytoplasm. The catalysed reaction is adenosine(1518)/adenosine(1519) in 16S rRNA + 4 S-adenosyl-L-methionine = N(6)-dimethyladenosine(1518)/N(6)-dimethyladenosine(1519) in 16S rRNA + 4 S-adenosyl-L-homocysteine + 4 H(+). Functionally, specifically dimethylates two adjacent adenosines (A1518 and A1519) in the loop of a conserved hairpin near the 3'-end of 16S rRNA in the 30S particle. May play a critical role in biogenesis of 30S subunits. In Escherichia coli O17:K52:H18 (strain UMN026 / ExPEC), this protein is Ribosomal RNA small subunit methyltransferase A.